Consider the following 406-residue polypeptide: Homocysteine-responsive endoplasmic reticulum-resident ubiquitin-like domain member 2 protein (406 aa).

One can recognise a Ubiquitin-like domain in the interval 10-89 (VTLIIKAPNQ…HMVHLVCTSR (80 aa)). Residues 86–156 (CTSRTPPSSP…PQAQTDPAQS (71 aa)) are disordered. 2 stretches are compositionally biased toward low complexity: residues 87-98 (TSRTPPSSPKSS) and 109-139 (SNSN…SSSE). Residues 145-156 (TLPQAQTDPAQS) are compositionally biased toward polar residues. A helical transmembrane segment spans residues 302–322 (FIMVMGAMLLVYLHQAGWFPF).

It localises to the membrane. Its function is as follows. Could be involved in the unfolded protein response (UPR) pathway. This chain is Homocysteine-responsive endoplasmic reticulum-resident ubiquitin-like domain member 2 protein (HERPUD2), found in Bos taurus (Bovine).